The sequence spans 180 residues: Large ribosomal subunit protein uL6 (180 aa).

Residues 158 to 180 are disordered; it reads YSGKGISYKGEKIRRKEGKTASK.

Belongs to the universal ribosomal protein uL6 family. In terms of assembly, part of the 50S ribosomal subunit.

Its function is as follows. This protein binds to the 23S rRNA, and is important in its secondary structure. It is located near the subunit interface in the base of the L7/L12 stalk, and near the tRNA binding site of the peptidyltransferase center. The polypeptide is Large ribosomal subunit protein uL6 (Mycoplasmopsis synoviae (strain 53) (Mycoplasma synoviae)).